Reading from the N-terminus, the 85-residue chain is Large ribosomal subunit protein bL27 (85 aa).

It belongs to the bacterial ribosomal protein bL27 family.

The protein is Large ribosomal subunit protein bL27 of Xylella fastidiosa (strain 9a5c).